Here is a 239-residue protein sequence, read N- to C-terminus: Diablo IAP-binding mitochondrial protein (239 aa).

A mitochondrion-targeting transit peptide spans 1 to 22; that stretch reads MAVLKSWLSRSVTLLFRYRQCL. The short motif at 56-60 is the IAP-binding element; it reads AVPIA. The segment at 217–239 is disordered; the sequence is RQKTQEEGEERAESEQEAYLRED.

It belongs to the Smac/DIABLO protein family. In terms of assembly, homodimer. Interacts with BEX3. Interacts with BIRC2/c-IAP1 (via BIR3 domain). Interacts with BIRC6/BRUCE. Interacts with BIRC7/livin. Interacts with XIAP/BIRC4 (via BIR3 domain). Interacts with the monomeric and dimeric form of BIRC5/survivin. Interacts with AREL1 (via HECT domain); in the cytoplasm following induction of apoptosis. In terms of processing, ubiquitinated by BIRC7/livin. Ubiquitinated by BIRC6. Post-translationally, the precursor form is proteolytically cleaved by mitochondrial processing peptidase MPP to remove the transit peptide and produce an intermediate form. This is then processed by PARL to produce the mature cleaved form which is released from mitochondria into the cytosol in apoptotic cells.

The protein resides in the mitochondrion. It localises to the cytoplasm. The protein localises to the cytosol. Promotes apoptosis by activating caspases in the cytochrome c/Apaf-1/caspase-9 pathway. Acts by opposing the inhibitory activity of inhibitor of apoptosis proteins (IAP). Inhibits the activity of BIRC6/BRUCE by inhibiting its binding to caspases. The chain is Diablo IAP-binding mitochondrial protein from Pongo abelii (Sumatran orangutan).